The primary structure comprises 498 residues: Glycerol kinase (498 aa).

Position 12 (Thr-12) interacts with ADP. 3 residues coordinate ATP: Thr-12, Thr-13, and Ser-14. Thr-12 contributes to the sn-glycerol 3-phosphate binding site. Residue Arg-16 coordinates ADP. 4 residues coordinate sn-glycerol 3-phosphate: Arg-82, Glu-83, Tyr-134, and Asp-241. Arg-82, Glu-83, Tyr-134, Asp-241, and Gln-242 together coordinate glycerol. Thr-263 and Gly-310 together coordinate ADP. The ATP site is built by Thr-263, Gly-310, Gln-314, and Gly-411. Residues Gly-411 and Asn-415 each contribute to the ADP site.

Belongs to the FGGY kinase family.

The enzyme catalyses glycerol + ATP = sn-glycerol 3-phosphate + ADP + H(+). It functions in the pathway polyol metabolism; glycerol degradation via glycerol kinase pathway; sn-glycerol 3-phosphate from glycerol: step 1/1. Inhibited by fructose 1,6-bisphosphate (FBP). Key enzyme in the regulation of glycerol uptake and metabolism. Catalyzes the phosphorylation of glycerol to yield sn-glycerol 3-phosphate. This chain is Glycerol kinase, found in Janthinobacterium sp. (strain Marseille) (Minibacterium massiliensis).